The chain runs to 323 residues: Thymidylate synthase (323 aa).

DUMP is bound by residues Arg-21 and 172-173; that span reads RR. The active-site Nucleophile is Cys-192. DUMP is bound by residues 214 to 217, Asn-225, and 255 to 257; these read RSND and HVY. A (6R)-5,10-methylene-5,6,7,8-tetrahydrofolate-binding site is contributed by Asp-217. Ala-322 serves as a coordination point for (6R)-5,10-methylene-5,6,7,8-tetrahydrofolate.

This sequence belongs to the thymidylate synthase family. Bacterial-type ThyA subfamily. In terms of assembly, homodimer.

It localises to the cytoplasm. It catalyses the reaction dUMP + (6R)-5,10-methylene-5,6,7,8-tetrahydrofolate = 7,8-dihydrofolate + dTMP. Its pathway is pyrimidine metabolism; dTTP biosynthesis. Functionally, catalyzes the reductive methylation of 2'-deoxyuridine-5'-monophosphate (dUMP) to 2'-deoxythymidine-5'-monophosphate (dTMP) while utilizing 5,10-methylenetetrahydrofolate (mTHF) as the methyl donor and reductant in the reaction, yielding dihydrofolate (DHF) as a by-product. This enzymatic reaction provides an intracellular de novo source of dTMP, an essential precursor for DNA biosynthesis. This chain is Thymidylate synthase, found in Pseudomonas syringae pv. tomato (strain ATCC BAA-871 / DC3000).